The following is a 308-amino-acid chain: Maspardin (308 aa).

The AB hydrolase-1 domain maps to phenylalanine 87 to methionine 159.

Belongs to the AB hydrolase superfamily. As to quaternary structure, interacts with CD4. Interacts with ALDH16A1.

It is found in the cytoplasm. May play a role as a negative regulatory factor in CD4-dependent T-cell activation. This is Maspardin (SPG21) from Macaca fascicularis (Crab-eating macaque).